A 360-amino-acid chain; its full sequence is Nucleoporin SEH1 (360 aa).

6 WD repeats span residues 10 to 49 (DHKD…DWHC), 55 to 96 (THSG…SNDK), 111 to 152 (DSRT…NLSQ), 160 to 210 (SCKL…RKYA), 217 to 258 (SVSD…KELS), and 276 to 315 (NHNS…NWKC).

This sequence belongs to the WD repeat SEC13 family. As to quaternary structure, component of the Nup107-160 subcomplex of the nuclear pore complex (NPC). The Nup107-160 subcomplex includes NUP160, NUP133, NUP107, NUP98, NUP85, NUP43, NUP37, SEH1 and SEC13. Component of the GATOR2 subcomplex, composed of MIOS, SEC13, SEH1L, WDR24 and WDR59. The GATOR2 complex interacts with CASTOR1 and CASTOR2; the interaction is negatively regulated by arginine. The GATOR2 complex interacts with SESN1, SESN2 and SESN3; the interaction is negatively regulated by amino acids.

The protein localises to the chromosome. It is found in the centromere. Its subcellular location is the kinetochore. It localises to the nucleus. The protein resides in the nuclear pore complex. The protein localises to the lysosome membrane. Its activity is regulated as follows. The GATOR2 complex is negatively regulated by the upstream amino acid sensors CASTOR1 and SESN2, which sequester the GATOR2 complex in absence of amino acids. In the presence of abundant amino acids, GATOR2 is released from CASTOR1 and SESN2 and activated. Component of the Nup107-160 subcomplex of the nuclear pore complex (NPC). The Nup107-160 subcomplex is required for the assembly of a functional NPC. The Nup107-160 subcomplex is also required for normal kinetochore microtubule attachment, mitotic progression and chromosome segregation. This subunit plays a role in recruitment of the Nup107-160 subcomplex to the kinetochore. In terms of biological role, as a component of the GATOR2 complex, functions as an activator of the amino acid-sensing branch of the mTORC1 signaling pathway. The GATOR2 complex indirectly activates mTORC1 through the inhibition of the GATOR1 subcomplex. GATOR2 probably acts as an E3 ubiquitin-protein ligase toward GATOR1. In the presence of abundant amino acids, the GATOR2 complex mediates ubiquitination of the NPRL2 core component of the GATOR1 complex, leading to GATOR1 inactivation. In the absence of amino acids, GATOR2 is inhibited, activating the GATOR1 complex. The polypeptide is Nucleoporin SEH1 (seh1l) (Xenopus tropicalis (Western clawed frog)).